The following is a 310-amino-acid chain: MARRKKGDAISGWICLDKPYDLTSTSAVSRVRRAFNAQKAGHAGTLDPLATGVLPLALGEATKTVPFLMDADKAYRFTIAWGRSTTTLDREGETTDSSDVRPTREQVEAVLAPFIGEIDQIPPNYSAIKVDGERAYDLAREGVEFELKTRKVKVHALRVTAAPDVDHLELEMECGKGTYVRAIVRDLAAALGACGHVDQLRRTRVGRFTEQTAIGLETLENLSYEARLSEALLPVETALDDIPALAVTDEDAFRLAQGRAIVLLPRQVESLKAVLTPGDRTVSAMSGQRLVALCEMRAGSLNPVRVFQLT.

The active-site Nucleophile is aspartate 47.

It belongs to the pseudouridine synthase TruB family. Type 1 subfamily.

The catalysed reaction is uridine(55) in tRNA = pseudouridine(55) in tRNA. Functionally, responsible for synthesis of pseudouridine from uracil-55 in the psi GC loop of transfer RNAs. The chain is tRNA pseudouridine synthase B from Caulobacter sp. (strain K31).